A 790-amino-acid polypeptide reads, in one-letter code: Kinesin-like protein KIF9 (790 aa).

The 335-residue stretch at 6 to 340 folds into the Kinesin motor domain; the sequence is KVQAFVRVRP…LRFASRMKLV (335 aa). Residues 12-14 and 93-100 each bind ATP; these read RVR and GQTGAGKT. A coiled-coil region spans residues 342 to 442; that stretch reads TEPAINEKYD…EQEVESALRR (101 aa). Residues 482 to 521 form a disordered region; it reads GVAPFSVKPGKKPKTKKTPKDQFSSSARKEGASSPVSGKD. Thr-530 bears the Phosphothreonine mark. A disordered region spans residues 547–577; sequence RERETSSIEPLISDSPKEELRAPRPSTPPSR. Residues 600 to 695 adopt a coiled-coil conformation; the sequence is KSILNERKKR…YCQRLVDQCR (96 aa).

This sequence belongs to the TRAFAC class myosin-kinesin ATPase superfamily. Kinesin family. In terms of assembly, interacts with HYDIN. In terms of tissue distribution, highly expressed in the testis (at protein level). Weakly expressed in the brain, thymus, lung and heart.

The protein resides in the cytoplasm. Its subcellular location is the cytoskeleton. It is found in the cell projection. The protein localises to the cilium. It localises to the flagellum. The protein resides in the flagellum axoneme. Essential for normal male fertility and for progressive motility of spermatozoa. The polypeptide is Kinesin-like protein KIF9 (Kif9) (Mus musculus (Mouse)).